The sequence spans 309 residues: Coproporphyrin III ferrochelatase (309 aa).

Fe-coproporphyrin III contacts are provided by residues Tyr-12, Arg-29, 45–46 (RY), Ser-53, and Tyr-124. Residues His-182 and Glu-263 each contribute to the Fe(2+) site.

It belongs to the ferrochelatase family.

Its subcellular location is the cytoplasm. The catalysed reaction is Fe-coproporphyrin III + 2 H(+) = coproporphyrin III + Fe(2+). It participates in porphyrin-containing compound metabolism; protoheme biosynthesis. Its function is as follows. Involved in coproporphyrin-dependent heme b biosynthesis. Catalyzes the insertion of ferrous iron into coproporphyrin III to form Fe-coproporphyrin III. The chain is Coproporphyrin III ferrochelatase from Listeria innocua serovar 6a (strain ATCC BAA-680 / CLIP 11262).